The sequence spans 1273 residues: Protein sax-3 (1273 aa).

The N-terminal stretch at 1-23 (MFNRKTLLCTILLVLQAVIRSFC) is a signal peptide. Ig-like C2-type domains follow at residues 31–127 (PVII…GSLK), 133–222 (EDFR…ARLS), 227–312 (PKFE…AHLR), 317–411 (PSFQ…LKVT), and 425–511 (PTIE…ASLT). Intrachain disulfides connect C52–C110, C154–C205, C248–C296, C338–C393, and C446–C495. 3 Fibronectin type-III domains span residues 533–628 (SPTQ…TSKP), 653–750 (QLIK…TAEA), and 755–849 (PPED…MNQD). Residues 874 to 894 (VPVIVIVAILIIFVVIIIAYC) traverse the membrane as a helical segment. A disordered region spans residues 1033-1273 (APAMPTNPVP…NNGIVTQEQT (241 aa)). A compositionally biased stretch (pro residues) spans 1037–1046 (PTNPVPPEPP). Polar residues predominate over residues 1096 to 1105 (QLHSSDGTGS). Positions 1106-1115 (SKERTGERRT) are enriched in basic and acidic residues. Over residues 1125–1136 (IPPPPSNPPPPG) the composition is skewed to pro residues. The span at 1145–1156 (QTATRRQLNRGS) shows a compositional bias: polar residues. Positions 1207–1222 (MDDDGGSSEADGENSE) are enriched in acidic residues. A compositionally biased stretch (polar residues) spans 1240 to 1273 (SASTLAHSCYGTNGTAQRFRSIPRNNGIVTQEQT).

Belongs to the immunoglobulin superfamily. ROBO/SAX3 family. As to expression, expressed in the AVG interneuron and the male-specific sensory neuron HOA.

The protein localises to the membrane. Its function is as follows. Required to confine migrating sex myoblasts to the ventral muscle quadrants during their migration through the body and for multiple aspects of sensory, motor, and interneuron axon guidance. This is Protein sax-3 from Caenorhabditis elegans.